We begin with the raw amino-acid sequence, 907 residues long: Translation initiation factor IF-2 (907 aa).

The disordered stretch occupies residues 26 to 317; sequence DAGMKKSSSD…KPKSMQHGFD (292 aa). Basic and acidic residues-rich tracts occupy residues 28–44 and 101–248; these read GMKK…EKQK and SAIE…DTDY. Positions 299–308 are enriched in basic residues; that stretch reads KGGRKGKLSK. A tr-type G domain is found at 406 to 575; sequence PRAPVVTIMG…LLQAEVLELT (170 aa). A G1 region spans residues 415 to 422; it reads GHVDHGKT. 415–422 is a binding site for GTP; the sequence is GHVDHGKT. The interval 440–444 is G2; the sequence is GITQH. The tract at residues 461-464 is G3; that stretch reads DTPG. Residues 461-465 and 515-518 contribute to the GTP site; these read DTPGH and NKID. Residues 515-518 form a G4 region; that stretch reads NKID. The tract at residues 551-553 is G5; sequence SAK.

The protein belongs to the TRAFAC class translation factor GTPase superfamily. Classic translation factor GTPase family. IF-2 subfamily.

The protein localises to the cytoplasm. One of the essential components for the initiation of protein synthesis. Protects formylmethionyl-tRNA from spontaneous hydrolysis and promotes its binding to the 30S ribosomal subunits. Also involved in the hydrolysis of GTP during the formation of the 70S ribosomal complex. In Vibrio vulnificus (strain CMCP6), this protein is Translation initiation factor IF-2.